A 432-amino-acid chain; its full sequence is Enolase (432 aa).

Gln167 contacts (2R)-2-phosphoglycerate. Glu209 (proton donor) is an active-site residue. Positions 246, 290, and 317 each coordinate Mg(2+). Residues Lys342, Arg371, Ser372, and Lys393 each contribute to the (2R)-2-phosphoglycerate site. The Proton acceptor role is filled by Lys342.

This sequence belongs to the enolase family. As to quaternary structure, component of the RNA degradosome, a multiprotein complex involved in RNA processing and mRNA degradation. The cofactor is Mg(2+).

Its subcellular location is the cytoplasm. It is found in the secreted. The protein localises to the cell surface. It carries out the reaction (2R)-2-phosphoglycerate = phosphoenolpyruvate + H2O. The protein operates within carbohydrate degradation; glycolysis; pyruvate from D-glyceraldehyde 3-phosphate: step 4/5. Functionally, catalyzes the reversible conversion of 2-phosphoglycerate (2-PG) into phosphoenolpyruvate (PEP). It is essential for the degradation of carbohydrates via glycolysis. This Cronobacter sakazakii (strain ATCC BAA-894) (Enterobacter sakazakii) protein is Enolase.